The sequence spans 88 residues: Acylphosphatase (88 aa).

The Acylphosphatase-like domain maps to 3-88 (AARFVVSGVV…VPPTEDFVTG (86 aa)). Catalysis depends on residues Arg-18 and Asn-36.

It belongs to the acylphosphatase family.

It catalyses the reaction an acyl phosphate + H2O = a carboxylate + phosphate + H(+). This is Acylphosphatase (acyP) from Xanthomonas euvesicatoria pv. vesicatoria (strain 85-10) (Xanthomonas campestris pv. vesicatoria).